The sequence spans 462 residues: GTPase HflX (462 aa).

Residues P255–P452 form the Hflx-type G domain. GTP-binding positions include G261–S268, F286–D290, D308–G311, N374–D377, and S430–Y432. Residues S268 and T288 each coordinate Mg(2+).

The protein belongs to the TRAFAC class OBG-HflX-like GTPase superfamily. HflX GTPase family. In terms of assembly, monomer. Associates with the 50S ribosomal subunit. Mg(2+) serves as cofactor.

It is found in the cytoplasm. Its function is as follows. GTPase that associates with the 50S ribosomal subunit and may have a role during protein synthesis or ribosome biogenesis. This Leptospira borgpetersenii serovar Hardjo-bovis (strain JB197) protein is GTPase HflX.